The chain runs to 93 residues: Aspartyl/glutamyl-tRNA(Asn/Gln) amidotransferase subunit C (93 aa).

Belongs to the GatC family. As to quaternary structure, heterotrimer of A, B and C subunits.

The enzyme catalyses L-glutamyl-tRNA(Gln) + L-glutamine + ATP + H2O = L-glutaminyl-tRNA(Gln) + L-glutamate + ADP + phosphate + H(+). It carries out the reaction L-aspartyl-tRNA(Asn) + L-glutamine + ATP + H2O = L-asparaginyl-tRNA(Asn) + L-glutamate + ADP + phosphate + 2 H(+). Allows the formation of correctly charged Asn-tRNA(Asn) or Gln-tRNA(Gln) through the transamidation of misacylated Asp-tRNA(Asn) or Glu-tRNA(Gln) in organisms which lack either or both of asparaginyl-tRNA or glutaminyl-tRNA synthetases. The reaction takes place in the presence of glutamine and ATP through an activated phospho-Asp-tRNA(Asn) or phospho-Glu-tRNA(Gln). This chain is Aspartyl/glutamyl-tRNA(Asn/Gln) amidotransferase subunit C, found in Methanothrix thermoacetophila (strain DSM 6194 / JCM 14653 / NBRC 101360 / PT) (Methanosaeta thermophila).